The following is a 91-amino-acid chain: RING finger protein Z (91 aa).

A lipid anchor (N-myristoyl glycine; by host) is attached at Gly-2. The segment at 35-71 adopts an RING-type; atypical zinc-finger fold; the sequence is CKCCWFQDKNLVECSDHYLCLKCISSMLKRGKNCEIC. The PTAP/PSAP motif signature appears at 85–88; sequence PTAP.

The protein belongs to the arenaviridae Z protein family. In terms of assembly, interacts with protein NP; this interaction probably directs the encapsidated genome to budding sites. Interacts (via RING domain) with polymerase L; this interaction inhibits viral transcription and replication, Z partially blocks the product exit tunnel for the releasing nascent RNA product. Interacts with the glycoprotein complex; this interaction plays a role in virion budding. Interacts with host eIF4E; this interaction results in eIF4E reduced affinity for its substrate, the 5'-m7 G cap structure. Interacts (via late-budding domain) with host TSG101; this interaction is essential for budding and release of viral particles. Interacts with host RPLP0; this interaction may serve to load ribosome-like particles inside the virion. Interacts with host PML; this interaction induces PML bodies redistribution in the cytoplasm upon viral infection. Myristoylation is required for the role of RING finger protein Z in assembly and budding.

The protein resides in the virion. The protein localises to the host cytoplasm. It is found in the host perinuclear region. Its subcellular location is the host cell membrane. Functionally, plays a crucial role in virion assembly and budding. Expressed late in the virus life cycle, it acts as an inhibitor of viral transcription and RNA synthesis by interacting with the viral polymerase L. Presumably recruits the NP encapsidated genome to cellular membranes at budding sites via direct interaction with NP. Plays critical roles in the final steps of viral release by interacting with host TSG101, a member of the vacuolar protein-sorting pathway and using other cellular host proteins involved in vesicle formation pathway. The budding of the virus progeny occurs after association of protein Z with the viral glycoprotein complex SSP-GP1-GP2 at the cell periphery, step that requires myristoylation of protein Z. Also selectively represses protein production by associating with host eIF4E. In cell-based minigenome assay, has an inhibitory effect on the ribonucleoprotein machinery (vRNP), which is responsible for the replication and transcription of the viral genome. The protein is RING finger protein Z of Latino mammarenavirus (isolate Rat/Bolivia/MARU 1924/1965) (LATV).